The chain runs to 834 residues: Glycerol-3-phosphate acyltransferase (834 aa).

Residues Cys309–Ile314 carry the HXXXXD motif motif.

The protein belongs to the GPAT/DAPAT family.

It localises to the cell inner membrane. The enzyme catalyses sn-glycerol 3-phosphate + an acyl-CoA = a 1-acyl-sn-glycero-3-phosphate + CoA. The protein operates within phospholipid metabolism; CDP-diacylglycerol biosynthesis; CDP-diacylglycerol from sn-glycerol 3-phosphate: step 1/3. This is Glycerol-3-phosphate acyltransferase from Pseudomonas fluorescens (strain Pf0-1).